A 521-amino-acid polypeptide reads, in one-letter code: Anthranilate synthase component 1 (521 aa).

L-tryptophan-binding positions include T40 and 292-294 (PYM). 329 to 330 (GT) is a binding site for chorismate. E362 contacts Mg(2+). Residues Y450, R470, 484-486 (GAG), and G486 contribute to the chorismate site. Residue E499 participates in Mg(2+) binding.

Belongs to the anthranilate synthase component I family. As to quaternary structure, heterotetramer consisting of two non-identical subunits: a beta subunit (TrpG) and a large alpha subunit (TrpE). It depends on Mg(2+) as a cofactor.

It catalyses the reaction chorismate + L-glutamine = anthranilate + pyruvate + L-glutamate + H(+). It functions in the pathway amino-acid biosynthesis; L-tryptophan biosynthesis; L-tryptophan from chorismate: step 1/5. With respect to regulation, feedback inhibited by tryptophan. Its function is as follows. Part of a heterotetrameric complex that catalyzes the two-step biosynthesis of anthranilate, an intermediate in the biosynthesis of L-tryptophan. In the first step, the glutamine-binding beta subunit (TrpG) of anthranilate synthase (AS) provides the glutamine amidotransferase activity which generates ammonia as a substrate that, along with chorismate, is used in the second step, catalyzed by the large alpha subunit of AS (TrpE) to produce anthranilate. In the absence of TrpG, TrpE can synthesize anthranilate directly from chorismate and high concentrations of ammonia. The chain is Anthranilate synthase component 1 (trpE) from Buchnera aphidicola subsp. Acyrthosiphon pisum (strain APS) (Acyrthosiphon pisum symbiotic bacterium).